A 598-amino-acid chain; its full sequence is Transcriptional repressor tup12 (598 aa).

Residues 118-177 (IASGVVPQSSKTKHGRNSVSFGKYGNAGPFNSDNSSKPLILNNGSSGGTPKNLRSPAIDS) are disordered. WD repeat units lie at residues 285-325 (EPPI…AMVF), 332-371 (LITLLQEESSKREGDLYVRSVAFSPDGKYLATGVEDQQIR), 374-413 (DIAQKRVYRLLTGHEQEIYSLDFSKDGKTLVSGSGDRTVC), 415-454 (WDVEAGEQKLILHTDDGVTTVMFSPDGQFIAAGSLDKVIR), 456-495 (WTSSGTLVEQLHGHEESVYSVAFSPDGKYLVSGSLDNTIK), 510-549 (YKEGGICKQTFTGHKDFILSVTVSPDGKWIISGSKDRTIQ), and 552-585 (SPDSPHSQLTLQGHNNSVISVAVSPNGHCFATGS).

The protein belongs to the WD repeat TUP1 family.

Its function is as follows. Transcriptional repressor. The chain is Transcriptional repressor tup12 (tup12) from Schizosaccharomyces pombe (strain 972 / ATCC 24843) (Fission yeast).